A 289-amino-acid chain; its full sequence is Diaminopimelate epimerase (289 aa).

Residues Asn13, Gln47, and Asn67 each contribute to the substrate site. The active-site Proton donor is the Cys76. Substrate-binding positions include 77–78, Asn167, Asn200, and 218–219; these read GN and ER. Cys227 (proton acceptor) is an active-site residue. 228–229 contributes to the substrate binding site; that stretch reads GT.

Belongs to the diaminopimelate epimerase family. Homodimer.

The protein resides in the cytoplasm. It catalyses the reaction (2S,6S)-2,6-diaminopimelate = meso-2,6-diaminopimelate. Its pathway is amino-acid biosynthesis; L-lysine biosynthesis via DAP pathway; DL-2,6-diaminopimelate from LL-2,6-diaminopimelate: step 1/1. Catalyzes the stereoinversion of LL-2,6-diaminopimelate (L,L-DAP) to meso-diaminopimelate (meso-DAP), a precursor of L-lysine and an essential component of the bacterial peptidoglycan. This Burkholderia thailandensis (strain ATCC 700388 / DSM 13276 / CCUG 48851 / CIP 106301 / E264) protein is Diaminopimelate epimerase.